Reading from the N-terminus, the 362-residue chain is Guanine nucleotide-binding protein alpha-10 subunit (362 aa).

Gly-2 is lipidated: N-myristoyl glycine. A lipid anchor (S-palmitoyl cysteine) is attached at Cys-4. Positions 35–362 (LEQSVLLIGP…QENLKDTGMI (328 aa)) constitute a G-alpha domain. The interval 38–51 (SVLLIGPGESGKST) is G1 motif. GTP-binding positions include 43-50 (GPGESGKS), 184-190 (VRIRVPT), 209-213 (DCGGQ), 278-281 (NKID), and Ala-335. Residues Ser-50 and Thr-190 each coordinate Mg(2+). A G2 motif region spans residues 182-190 (DIVRIRVPT). A G3 motif region spans residues 205-214 (LSVIDCGGQR). A G4 motif region spans residues 274–281 (ILFLNKID). A G5 motif region spans residues 333-337 (TCAIS).

Belongs to the G-alpha family. As to quaternary structure, g proteins are composed of 3 units; alpha, beta and gamma. The alpha chain contains the guanine nucleotide binding site.

Guanine nucleotide-binding proteins (G proteins) are involved as modulators or transducers in various transmembrane signaling systems. This chain is Guanine nucleotide-binding protein alpha-10 subunit (gpa-10), found in Caenorhabditis briggsae.